The following is a 354-amino-acid chain: CREB/ATF bZIP transcription factor (354 aa).

3 disordered regions span residues 1–95 (MRHS…PGEE), 113–156 (PRQP…AAEM), and 171–214 (GGCS…RKAA). S50 carries the phosphoserine modification. Low complexity predominate over residues 121–132 (DPGLSSPGPLSS). Composition is skewed to gly residues over residues 133–143 (SGGGSDSGGLW) and 190–199 (PGGGGGGGSG). A bZIP domain is found at 204 to 267 (QAATKSPRKA…QALQEESRYL (64 aa)). Positions 205–214 (AATKSPRKAA) are enriched in low complexity. The basic motif stretch occupies residues 219–226 (RLNRLKKK). Residues 232–267 (LESRVRGLAAENQELRAENRELGKRVQALQEESRYL) form a leucine-zipper region. Residues 303–306 (DHDY) carry the HCFC1-binding motif (HBM) motif.

This sequence belongs to the bZIP family. ATF subfamily. Interacts with HCFC1; the interaction inhibits CREB3 transcriptional activity. Interacts with CREB3; the interaction occurs only in combination with HCFC1. In adults, expressed most abundantly in heart, liver and skeletal muscle, moderately abundant in kidney and pancreas, and barely detectable in lung. In fetal tissues, expressed most abundantly in kidney and very low amounts in heart, lung and liver.

The protein localises to the nucleus. In terms of biological role, strongly activates transcription when bound to HCFC1. Suppresses the expression of HSV proteins in cells infected with the virus in a HCFC1-dependent manner. Also suppresses the HCFC1-dependent transcriptional activation by CREB3 and reduces the amount of CREB3 in the cell. Able to down-regulate expression of some cellular genes in CREBZF-expressing cells. The polypeptide is CREB/ATF bZIP transcription factor (CREBZF) (Homo sapiens (Human)).